A 322-amino-acid chain; its full sequence is Mas-related G-protein coupled receptor member X4 (322 aa).

Topologically, residues 1-31 (MDPTVPVFGTKLTPINGREETPCYNQTLSFT) are extracellular. Asparagine 25 carries N-linked (GlcNAc...) asparagine glycosylation. A helical membrane pass occupies residues 32–52 (VLTCIISLVGLTGNAVVLWLL). Residues 53-60 (GYRMRRNA) lie on the Cytoplasmic side of the membrane. Residues 61 to 81 (VSIYILNLAAADFLFLSFQII) form a helical membrane-spanning segment. The Extracellular segment spans residues 82–96 (RLPLRLINISHLIRK). Residue asparagine 89 is glycosylated (N-linked (GlcNAc...) asparagine). Residues 97–117 (ILVSVMTFPYFTGLSMLSAIS) traverse the membrane as a helical segment. Over 118–137 (TERCLSVLWPIWYRCRRPTH) the chain is Cytoplasmic. Residues 138-158 (LSAVVCVLLWGLSLLFSMLEW) form a helical membrane-spanning segment. The Extracellular segment spans residues 159–177 (RFCDFLFSGADSSWCETSD). Residues 178-198 (FIPVAWLIFLCVVLCVSSLVL) traverse the membrane as a helical segment. The Cytoplasmic segment spans residues 199–218 (LVRILCGSRKMPLTRLYVTI). Residues 219 to 239 (LLTVLVFLLCGLPFGILGALI) form a helical membrane-spanning segment. Residues 240–254 (YRMHLNLEVLYCHVY) lie on the Extracellular side of the membrane. A helical membrane pass occupies residues 255-275 (LVCMSLSSLNSSANPIIYFFV). Residues 276–322 (GSFRQRQNRQNLKLVLQRALQDKPEVDKGEGQLPEESLELSGSRLGP) are Cytoplasmic-facing. The disordered stretch occupies residues 299-322 (PEVDKGEGQLPEESLELSGSRLGP).

It belongs to the G-protein coupled receptor 1 family. Mas subfamily. Uniquely localized in a subset of small dorsal root and trigeminal sensory neurons.

The protein resides in the cell membrane. Orphan receptor. Probably involved in the function of nociceptive neurons. May regulate nociceptor function and/or development, including the sensation or modulation of pain. Potently activated by enkephalins. This Homo sapiens (Human) protein is Mas-related G-protein coupled receptor member X4 (MRGPRX4).